The chain runs to 1194 residues: MAIRTGFCNPFLTQASGIKYNPRTGRGSNREFLHSYKTTMSSFQFLAPKCLDEDVPMEERKGVHVGTLSRPPKVYCNGKEVPILDFRCSSPWPRRVNIWGEIDFRGDKFDPRFNTFHVYDIVETTEAASNGDVSRFATATRPLGTVITLLGMSRCGKRVAVHVYGICQYFYINKAEVDTACGIRSGSELSVLLAECLRSSMITQNDATLNGDKNAFHGTSFKSASPESFRVEVIERTDVYYYDTQPCAFYRVYSPSSKFTNYLCDNFHPELKKYEGRVDATTRFLMDNPGFVSFGWYQLKPGVDGERVRVRPASRQLTLSDVEIDCMSDNLQAIPNDDSWPDYKLLCFDIECKSGGSNELAFPDATHLEDLVIQISCLLYSIPRQSLEHILLFSLGSCDLPQRYVQEMKDAGLPEPTVLEFDSEFELLIAFMTLVKQYAPEFATGYNIVNFDWAFIMEKLNSIYSLKLDGYGSINRGGLFKIWDVGKSGFQRRSKVKINGLISLDMYAIATEKLKLSSYKLDSVAREALNESKRDLPYKDIPGYYASGPNTRGIIGEYCIQDSALVGKLFFKYLPHLELSAVARLARITLTKAIYDGQQVRIYTCLLGLASSRGFILPDGGYPATFEYKDVIPDVGDVEEEMDEDESVSPTGTSSGRNVGYKGARVFDPDTGFYIDPVVVLDFASLYPSIIQAHNLCFTTLTLNFETVKRLNPSDYATFTVGGKRLFFVRSNVRESLLGVLLKDWLAMRKAIRARIPGSSSDEAVLLDKQQAAIKVVCNSVYGFTGVAQGFLPCLYVAATVTTIGRQMLLSTRDYIHNNWAAFERFITAFPDIESSVLSQKAYEVKVIYGDTDSVFIRFKGVSVEGIAKIGEKMAHIISTALFCPPIKLECEKTFIKLLLITKKKYIGVIYGGKVLMKGVDLVRKNNCQFINDYARKLVELLLYDDTVSRAAAEASCVSIAEWNRRAMPSGMAGFGRIIADAHRQITSPKLDINKFVMTAELSRPPSAYINRRLAHLTVYYKLVMRQGQIPNVRERIPYVIVAPTDEVEADAKSVALLRGDPLQNTAGKRCGEAKRKLIISDLAEDPIHVTSHGLSLNIDYYFSHLIGTASVTFKALFGNDTKLTERLLKRFIPETRVVNVKMLNRLQAAGFVCIHAPCWDNKMNTEAEITEEEQSHQIMRRVFCIPKAILHQS.

This sequence belongs to the DNA polymerase type-B family. In terms of assembly, forms a complex with the ssDNA-binding protein, the DNA polymerase processivity factor, and the alkaline exonuclease. Interacts with the helicase-primase complex composed of the primase, the helicase and the primase-associated factor; this interaction may coordinate leading and lagging strand DNA synthesis at the replication fork.

The protein resides in the host nucleus. It carries out the reaction DNA(n) + a 2'-deoxyribonucleoside 5'-triphosphate = DNA(n+1) + diphosphate. The enzyme catalyses Endonucleolytic cleavage to 5'-phosphomonoester.. Replicates viral genomic DNA. The replication complex is composed of six viral proteins: the DNA polymerase, processivity factor, primase, primase-associated factor, helicase, and ssDNA-binding protein. Additionally, the polymerase contains an intrinsic ribonuclease H (RNase H) activity that specifically degrades RNA/DNA heteroduplexes or duplex DNA substrates in the 5' to 3' direction. Therefore, it can catalyze the excision of the RNA primers that initiate the synthesis of Okazaki fragments at a replication fork during viral DNA replication. This chain is DNA polymerase catalytic subunit, found in Varicella-zoster virus (strain Dumas) (HHV-3).